The following is a 188-amino-acid chain: UPF0314 protein Sala_3154 (188 aa).

3 helical membrane passes run 8 to 28 (TGWLVAAALVALLAAILIFMG), 57 to 77 (WYSFSHIIHGFIFYGVLRWIM), and 143 to 163 (MRWWVTAALAIAFELFTLWTI).

The protein belongs to the UPF0314 family.

Its subcellular location is the cell membrane. This Sphingopyxis alaskensis (strain DSM 13593 / LMG 18877 / RB2256) (Sphingomonas alaskensis) protein is UPF0314 protein Sala_3154.